A 301-amino-acid chain; its full sequence is UDP-N-acetylenolpyruvoylglucosamine reductase (301 aa).

Residues 24–190 (RVGGLAQFYD…VSAQLQLQPG (167 aa)) form the FAD-binding PCMH-type domain. R169 is an active-site residue. Residue S220 is the Proton donor of the active site. The active site involves E290.

It belongs to the MurB family. It depends on FAD as a cofactor.

It is found in the cytoplasm. It catalyses the reaction UDP-N-acetyl-alpha-D-muramate + NADP(+) = UDP-N-acetyl-3-O-(1-carboxyvinyl)-alpha-D-glucosamine + NADPH + H(+). It functions in the pathway cell wall biogenesis; peptidoglycan biosynthesis. Functionally, cell wall formation. This is UDP-N-acetylenolpyruvoylglucosamine reductase from Synechococcus sp. (strain ATCC 27144 / PCC 6301 / SAUG 1402/1) (Anacystis nidulans).